The chain runs to 858 residues: NEDD4-binding protein 1 (858 aa).

The tract at residues 17-37 (TCTEPPGGRQSPTASRAQPDS) is disordered. Residues 26-37 (QSPTASRAQPDS) show a composition bias toward polar residues. One can recognise a KH-like domain in the interval 96 to 180 (KEDVYKAKEY…VQQFVALFQE (85 aa)). 2 disordered regions span residues 262 to 321 (EDKT…TWTV) and 388 to 424 (QKTQSTQGAQRTSRTPDPSPCANASSTSTSNRLKEKE). Positions 285-316 (RSSESEQRDTKRQYSLERREEEQCEEREREPT) are enriched in basic and acidic residues. Residues 389-418 (KTQSTQGAQRTSRTPDPSPCANASSTSTSN) are compositionally biased toward polar residues. The RNase NYN domain occupies 598–750 (LRHIIIDGSN…LGKHGPHLDE (153 aa)). Residues 774-784 (SVYSQAAQSTA) show a composition bias toward polar residues. Residues 774–823 (SVYSQAAQSTAHPSSPSHWPHSGPPDWHLPRPSPSPPPQRSPSETTELKR) form a disordered region. A compositionally biased stretch (low complexity) spans 785–799 (HPSSPSHWPHSGPPD). Residues 804–813 (RPSPSPPPQR) show a composition bias toward pro residues. The interval 813-858 (RSPSETTELKRKLYDIFPDQKQRIDRILSDNPYMRDLNALSGLLLG) is coCUN.

The protein belongs to the N4BP1 family.

The protein localises to the nucleus. The protein resides in the nucleolus. It localises to the PML body. Functionally, potent suppressor of cytokine production that acts as a regulator of innate immune signaling and inflammation. Acts as a key negative regulator of select cytokine and chemokine responses elicited by TRIF-independent Toll-like receptors (TLRs), thereby limiting inflammatory cytokine responses to minor insults. Has ribonuclease activity. The protein is NEDD4-binding protein 1 of Danio rerio (Zebrafish).